A 353-amino-acid polypeptide reads, in one-letter code: Photosystem II protein D1 (353 aa).

Thr-2 carries the N-acetylthreonine modification. Thr-2 carries the phosphothreonine modification. The next 3 helical transmembrane spans lie at 29-46, 118-133, and 142-156; these read YIGW…TATS, HFLL…EWEL, and WIVV…AATA. Residue His-118 coordinates chlorophyll a. A pheophytin a-binding site is contributed by Tyr-126. [CaMn4O5] cluster is bound by residues Asp-170 and Glu-189. The helical transmembrane segment at 197–218 threads the bilayer; that stretch reads FHMLGVAGVFGGSLFSAMHGSL. Residue His-198 coordinates chlorophyll a. Residues His-215 and 264–265 each bind a quinone; that span reads SF. His-215 contacts Fe cation. Position 272 (His-272) interacts with Fe cation. A helical membrane pass occupies residues 274–288; it reads FLAAWPVVGIWFTAL. The [CaMn4O5] cluster site is built by His-332, Glu-333, Asp-342, and Ala-344. Positions 345 to 353 are excised as a propeptide; sequence AVDAPSISG.

Belongs to the reaction center PufL/M/PsbA/D family. As to quaternary structure, PSII is composed of 1 copy each of membrane proteins PsbA, PsbB, PsbC, PsbD, PsbE, PsbF, PsbH, PsbI, PsbJ, PsbK, PsbL, PsbM, PsbT, PsbX, PsbY, PsbZ, Psb30/Ycf12, at least 3 peripheral proteins of the oxygen-evolving complex and a large number of cofactors. It forms dimeric complexes. It depends on The D1/D2 heterodimer binds P680, chlorophylls that are the primary electron donor of PSII, and subsequent electron acceptors. It shares a non-heme iron and each subunit binds pheophytin, quinone, additional chlorophylls, carotenoids and lipids. D1 provides most of the ligands for the Mn4-Ca-O5 cluster of the oxygen-evolving complex (OEC). There is also a Cl(-1) ion associated with D1 and D2, which is required for oxygen evolution. The PSII complex binds additional chlorophylls, carotenoids and specific lipids. as a cofactor. Tyr-161 forms a radical intermediate that is referred to as redox-active TyrZ, YZ or Y-Z. Post-translationally, C-terminally processed by CTPA; processing is essential to allow assembly of the oxygen-evolving complex and thus photosynthetic growth.

The protein localises to the plastid. It localises to the chloroplast thylakoid membrane. It catalyses the reaction 2 a plastoquinone + 4 hnu + 2 H2O = 2 a plastoquinol + O2. Its function is as follows. Photosystem II (PSII) is a light-driven water:plastoquinone oxidoreductase that uses light energy to abstract electrons from H(2)O, generating O(2) and a proton gradient subsequently used for ATP formation. It consists of a core antenna complex that captures photons, and an electron transfer chain that converts photonic excitation into a charge separation. The D1/D2 (PsbA/PsbD) reaction center heterodimer binds P680, the primary electron donor of PSII as well as several subsequent electron acceptors. The protein is Photosystem II protein D1 of Vicia faba (Broad bean).